A 277-amino-acid polypeptide reads, in one-letter code: MQHEAHTHGINMSALGRDKQSLSLEQETVAIEVPGLSLYYGEKQALFDVSMNIPKQRVTAFIGPSGCGKSTLLRTFNRMNDLVDGCRVEGAINLYGNNIYRKGEDVAELRRRVGMVFQKPNPFPKTIYENVVYGLRIQGINKKRVLDEAVEWALKGAALWDEVKDRLHDSALGLSGGQQQRLVIARTIAVEPEVLLLDEPCSALDPISTLKVEELIYELKSKFTIVIVTHNMQQAARVSDYTAFMYMGKLVEFGDTDTLFTNPAKKQTEDYITGRYG.

The region spanning 31-272 (IEVPGLSLYY…PAKKQTEDYI (242 aa)) is the ABC transporter domain. ATP is bound at residue 63–70 (GPSGCGKS).

It belongs to the ABC transporter superfamily. Phosphate importer (TC 3.A.1.7) family. The complex is composed of two ATP-binding proteins (PstB), two transmembrane proteins (PstC and PstA) and a solute-binding protein (PstS).

The protein resides in the cell inner membrane. It catalyses the reaction phosphate(out) + ATP + H2O = ADP + 2 phosphate(in) + H(+). Functionally, part of the ABC transporter complex PstSACB involved in phosphate import. Responsible for energy coupling to the transport system. This is Phosphate import ATP-binding protein PstB from Pseudomonas fluorescens (strain ATCC BAA-477 / NRRL B-23932 / Pf-5).